The chain runs to 119 residues: Ribonuclease P protein component (119 aa).

The protein belongs to the RnpA family. In terms of assembly, consists of a catalytic RNA component (M1 or rnpB) and a protein subunit.

It carries out the reaction Endonucleolytic cleavage of RNA, removing 5'-extranucleotides from tRNA precursor.. In terms of biological role, RNaseP catalyzes the removal of the 5'-leader sequence from pre-tRNA to produce the mature 5'-terminus. It can also cleave other RNA substrates such as 4.5S RNA. The protein component plays an auxiliary but essential role in vivo by binding to the 5'-leader sequence and broadening the substrate specificity of the ribozyme. This is Ribonuclease P protein component from Serratia proteamaculans (strain 568).